We begin with the raw amino-acid sequence, 318 residues long: MSAHQQGTELDLSWISKIQVNKPAVLRRAEQIQARRPVKKEWQAAWLLKAVTCIDLTTLSGDDTASNIQRLCYKAKYPIREDLLKALNMHDKGITTAAVCVYPARVCDAVRALKAAGCDIPVASVATGFPAAQTHLKTRLEEIRLAVEDGATEIDVVINRTLVLTGQWKALYDEIRQFRKACGEAHLKTILATGELGSLTNVYKASMIAMMAGSDFIKTSTGKETVNATFPVAIVMLRAIRDFFWKTGNKVGFKPAGGIRSAKDSLVWLSLIKEELGDEWMKPELFRIGASTLLADIERQIYHHVTGRYAAYHDLPMS.

The active-site Proton donor/acceptor is Asp155. Lys218 (schiff-base intermediate with acetaldehyde) is an active-site residue. Lys254 acts as the Proton donor/acceptor in catalysis.

Belongs to the DeoC/FbaB aldolase family. DeoC type 2 subfamily. Interacts with YBX1.

It is found in the cytoplasm. It localises to the cytoplasmic granule. The protein resides in the nucleus. The catalysed reaction is 2-deoxy-D-ribose 5-phosphate = D-glyceraldehyde 3-phosphate + acetaldehyde. Its pathway is carbohydrate degradation; 2-deoxy-D-ribose 1-phosphate degradation; D-glyceraldehyde 3-phosphate and acetaldehyde from 2-deoxy-alpha-D-ribose 1-phosphate: step 2/2. Catalyzes a reversible aldol reaction between acetaldehyde and D-glyceraldehyde 3-phosphate to generate 2-deoxy-D-ribose 5-phosphate. Participates in stress granule (SG) assembly. May allow ATP production from extracellular deoxyinosine in conditions of energy deprivation. The polypeptide is Deoxyribose-phosphate aldolase (DERA) (Bos taurus (Bovine)).